We begin with the raw amino-acid sequence, 760 residues long: Xaa-Pro dipeptidyl-peptidase (760 aa).

Active-site charge relay system residues include Ser-349, Asp-469, and His-499.

The protein belongs to the peptidase S15 family. Homodimer.

Its subcellular location is the cytoplasm. The enzyme catalyses Hydrolyzes Xaa-Pro-|- bonds to release unblocked, N-terminal dipeptides from substrates including Ala-Pro-|-p-nitroanilide and (sequentially) Tyr-Pro-|-Phe-Pro-|-Gly-Pro-|-Ile.. In terms of biological role, removes N-terminal dipeptides sequentially from polypeptides having unsubstituted N-termini provided that the penultimate residue is proline. The protein is Xaa-Pro dipeptidyl-peptidase of Streptococcus pyogenes serotype M18 (strain MGAS8232).